The sequence spans 52 residues: U-scutigerotoxin(01)-Tl1a (52 aa).

Positions 1–25 are cleaved as a signal peptide; sequence MLAKAMSLLMMFLLVLVIGSVMVSA.

This sequence belongs to the scutigerotoxin-01 family. In terms of processing, contains 1 disulfide bond. As to expression, expressed by the venom gland.

It is found in the secreted. The sequence is that of U-scutigerotoxin(01)-Tl1a from Thereuopoda longicornis (Long-legged centipede).